The sequence spans 334 residues: CRISPR-associated protein Cas1 3 (334 aa).

The Mn(2+) site is built by Glu165, His230, and Glu245.

Belongs to the CRISPR-associated endonuclease Cas1 family. As to quaternary structure, homodimer, forms a heterotetramer with a Cas2 homodimer. The cofactor is Mg(2+). It depends on Mn(2+) as a cofactor.

In terms of biological role, CRISPR (clustered regularly interspaced short palindromic repeat), is an adaptive immune system that provides protection against mobile genetic elements (viruses, transposable elements and conjugative plasmids). CRISPR clusters contain spacers, sequences complementary to antecedent mobile elements, and target invading nucleic acids. CRISPR clusters are transcribed and processed into CRISPR RNA (crRNA). Acts as a dsDNA endonuclease. Involved in the integration of spacer DNA into the CRISPR cassette. This is CRISPR-associated protein Cas1 3 from Methanobrevibacter ruminantium (strain ATCC 35063 / DSM 1093 / JCM 13430 / OCM 146 / M1) (Methanobacterium ruminantium).